The following is a 4250-amino-acid chain: Dynein axonemal heavy chain 1 (4250 aa).

The tract at residues Met-1–Lys-73 is disordered. The interval Met-1–Ile-1527 is stem. A compositionally biased stretch (basic and acidic residues) spans Pro-24 to Arg-42. Positions Asn-46–Pro-55 are enriched in pro residues. 4 AAA regions span residues Tyr-1528–Ala-1749, Gln-1809–Lys-2042, Thr-2174–Gly-2434, and Asp-2532–His-2784. The short motif at Gly-1566–Thr-1573 is the GPAGTGKT motif element. Gly-1566–Thr-1573 lines the ATP pocket. The CFDEFNR motif motif lies at Cys-1616–Arg-1622. ATP-binding positions include Gly-1847 to Ser-1854, Gly-2212 to Thr-2219, and Gly-2571 to Ser-2578. The stalk stretch occupies residues Phe-2799–Cys-3097. The stretch at Leu-3045–Met-3128 forms a coiled coil. AAA regions lie at residues Leu-3182–Ala-3412 and Met-3625–Met-3844.

It belongs to the dynein heavy chain family. Consists of at least two heavy chains and a number of intermediate and light chains.

The protein resides in the cytoplasm. It is found in the cytoskeleton. Its subcellular location is the cilium axoneme. It localises to the cell projection. The protein localises to the cilium. The protein resides in the flagellum. Its function is as follows. Force generating protein of cilia required for sperm flagellum motility. Produces force towards the minus ends of microtubules. Dynein has ATPase activity; the force-producing power stroke is thought to occur on release of ADP. Required in spermatozoa for the formation of the inner dynein arms and biogenesis of the axoneme. The chain is Dynein axonemal heavy chain 1 from Mus musculus (Mouse).